Consider the following 354-residue polypeptide: Selenide, water dikinase (354 aa).

C23 is a catalytic residue. ATP is bound by residues K26 and 54-56; that span reads TSD. Mg(2+) is bound at residue D57. ATP contacts are provided by residues D74, D97, and 145–147; that span reads GHS. D97 contacts Mg(2+). D233 contacts Mg(2+).

Belongs to the selenophosphate synthase 1 family. Class I subfamily. In terms of assembly, homodimer. Mg(2+) is required as a cofactor.

It carries out the reaction hydrogenselenide + ATP + H2O = selenophosphate + AMP + phosphate + 2 H(+). Functionally, synthesizes selenophosphate from selenide and ATP. This Burkholderia cenocepacia (strain ATCC BAA-245 / DSM 16553 / LMG 16656 / NCTC 13227 / J2315 / CF5610) (Burkholderia cepacia (strain J2315)) protein is Selenide, water dikinase.